Consider the following 358-residue polypeptide: Plastoglobulin-1, chloroplastic (358 aa).

Residues 1-47 (MALLSSTLRAPLVFSKNPKPVSLSSLHSRIYLSPRSPRFPSLRFISA) constitute a chloroplast transit peptide. The interval 48 to 114 (AGDTGDAEKP…NDAGNGTPTF (67 aa)) is disordered.

Belongs to the PAP/fibrillin family.

It localises to the plastid. The protein localises to the chloroplast. Functionally, may form together with other plastoglobulins a coat on the surface of the lipoprotein particle. The coat may contain receptors for attachment to the thylakoid membrane as well as regulatory proteins that may function in the transfer of lipids to and from the thylakoid membranes. The polypeptide is Plastoglobulin-1, chloroplastic (PG1) (Pisum sativum (Garden pea)).